The primary structure comprises 37 residues: uncharacterized protein (37 aa).

This is an uncharacterized protein from Bacillus caldotenax.